The primary structure comprises 201 residues: Probable chemoreceptor glutamine deamidase CheD 1 (201 aa).

The protein belongs to the CheD family.

The catalysed reaction is L-glutaminyl-[protein] + H2O = L-glutamyl-[protein] + NH4(+). In terms of biological role, probably deamidates glutamine residues to glutamate on methyl-accepting chemotaxis receptors (MCPs), playing an important role in chemotaxis. The sequence is that of Probable chemoreceptor glutamine deamidase CheD 1 from Dechloromonas aromatica (strain RCB).